Consider the following 358-residue polypeptide: Porphobilinogen deaminase, chloroplastic (358 aa).

The signal sequence occupies residues 1–24 (MPPPPRCAATTAHHSLLGSPTCLA). Position 290 is an S-(dipyrrolylmethanemethyl)cysteine (Cys-290).

This sequence belongs to the HMBS family. It depends on dipyrromethane as a cofactor.

The protein resides in the plastid. It is found in the chloroplast. It catalyses the reaction 4 porphobilinogen + H2O = hydroxymethylbilane + 4 NH4(+). The protein operates within porphyrin-containing compound metabolism; protoporphyrin-IX biosynthesis; coproporphyrinogen-III from 5-aminolevulinate: step 2/4. It functions in the pathway porphyrin-containing compound metabolism; chlorophyll biosynthesis. Its function is as follows. Tetrapolymerization of the monopyrrole PBG into the hydroxymethylbilane pre-uroporphyrinogen in several discrete steps. The protein is Porphobilinogen deaminase, chloroplastic (HEMC) of Oryza sativa subsp. japonica (Rice).